Reading from the N-terminus, the 892-residue chain is Leucine--tRNA ligase (892 aa).

Residues 42 to 52 (PYPSGKLHMGH) carry the 'HIGH' region motif. A 'KMSKS' region motif is present at residues 640–644 (TMSKS). An ATP-binding site is contributed by Lys643.

Belongs to the class-I aminoacyl-tRNA synthetase family.

The protein resides in the cytoplasm. It catalyses the reaction tRNA(Leu) + L-leucine + ATP = L-leucyl-tRNA(Leu) + AMP + diphosphate. This chain is Leucine--tRNA ligase, found in Albidiferax ferrireducens (strain ATCC BAA-621 / DSM 15236 / T118) (Rhodoferax ferrireducens).